The primary structure comprises 164 residues: Endoribonuclease YbeY (164 aa).

Zn(2+) contacts are provided by His-125, His-129, and His-135.

This sequence belongs to the endoribonuclease YbeY family. Requires Zn(2+) as cofactor.

The protein resides in the cytoplasm. In terms of biological role, single strand-specific metallo-endoribonuclease involved in late-stage 70S ribosome quality control and in maturation of the 3' terminus of the 16S rRNA. This chain is Endoribonuclease YbeY, found in Paramagnetospirillum magneticum (strain ATCC 700264 / AMB-1) (Magnetospirillum magneticum).